A 100-amino-acid polypeptide reads, in one-letter code: MELTPREKDKLMLFTAGLVAERRLNRGLKLNYPEAVALISCAIMEGARDGRTVADLMNYGRTVLTADQVMEGVPEMVHNVQVECTFPDGTKLVSIHEPIV.

Belongs to the urease gamma subunit family. Heterotrimer of UreA (gamma), UreB (beta) and UreC (alpha) subunits. Three heterotrimers associate to form the active enzyme.

It is found in the cytoplasm. It carries out the reaction urea + 2 H2O + H(+) = hydrogencarbonate + 2 NH4(+). It participates in nitrogen metabolism; urea degradation; CO(2) and NH(3) from urea (urease route): step 1/1. The sequence is that of Urease subunit gamma from Shewanella halifaxensis (strain HAW-EB4).